We begin with the raw amino-acid sequence, 247 residues long: Uridylate kinase (247 aa).

18–21 (KLSG) contacts ATP. A UMP-binding site is contributed by glycine 60. Glycine 61 and arginine 65 together coordinate ATP. UMP-binding positions include aspartate 80 and 141-148 (TGNPFFTT). ATP-binding residues include threonine 168, tyrosine 174, and aspartate 177.

This sequence belongs to the UMP kinase family. As to quaternary structure, homohexamer.

The protein resides in the cytoplasm. It catalyses the reaction UMP + ATP = UDP + ADP. It participates in pyrimidine metabolism; CTP biosynthesis via de novo pathway; UDP from UMP (UMPK route): step 1/1. Its activity is regulated as follows. Inhibited by UTP. Catalyzes the reversible phosphorylation of UMP to UDP. This Pseudomonas putida (strain ATCC 47054 / DSM 6125 / CFBP 8728 / NCIMB 11950 / KT2440) protein is Uridylate kinase.